Reading from the N-terminus, the 123-residue chain is Thioredoxin H-type (123 aa).

One can recognise a Thioredoxin domain in the interval 2–119; that stretch reads AATAELIPAG…IEAKLLKHSQ (118 aa). A disulfide bond links C45 and C48.

This sequence belongs to the thioredoxin family. Plant H-type subfamily.

It is found in the cytoplasm. Its function is as follows. Participates in various redox reactions through the reversible oxidation of the active center dithiol to a disulfide. The H form is known to activate a number of cytosolic enzymes. This Brassica campestris (Field mustard) protein is Thioredoxin H-type (PEC-2).